The sequence spans 280 residues: 4-diphosphocytidyl-2-C-methyl-D-erythritol kinase (280 aa).

Residue Lys-8 is part of the active site. Pro-91–Ser-101 contributes to the ATP binding site. Asp-133 is an active-site residue.

The protein belongs to the GHMP kinase family. IspE subfamily.

It catalyses the reaction 4-CDP-2-C-methyl-D-erythritol + ATP = 4-CDP-2-C-methyl-D-erythritol 2-phosphate + ADP + H(+). The protein operates within isoprenoid biosynthesis; isopentenyl diphosphate biosynthesis via DXP pathway; isopentenyl diphosphate from 1-deoxy-D-xylulose 5-phosphate: step 3/6. In terms of biological role, catalyzes the phosphorylation of the position 2 hydroxy group of 4-diphosphocytidyl-2C-methyl-D-erythritol. The chain is 4-diphosphocytidyl-2-C-methyl-D-erythritol kinase from Clostridium tetani (strain Massachusetts / E88).